The sequence spans 95 residues: Co-chaperonin GroES (95 aa).

This sequence belongs to the GroES chaperonin family. Heptamer of 7 subunits arranged in a ring. Interacts with the chaperonin GroEL.

Its subcellular location is the cytoplasm. Together with the chaperonin GroEL, plays an essential role in assisting protein folding. The GroEL-GroES system forms a nano-cage that allows encapsulation of the non-native substrate proteins and provides a physical environment optimized to promote and accelerate protein folding. GroES binds to the apical surface of the GroEL ring, thereby capping the opening of the GroEL channel. The chain is Co-chaperonin GroES from Nitratidesulfovibrio vulgaris (strain DSM 19637 / Miyazaki F) (Desulfovibrio vulgaris).